We begin with the raw amino-acid sequence, 143 residues long: Large ribosomal subunit protein uL11 (143 aa).

It belongs to the universal ribosomal protein uL11 family. Part of the ribosomal stalk of the 50S ribosomal subunit. Interacts with L10 and the large rRNA to form the base of the stalk. L10 forms an elongated spine to which L12 dimers bind in a sequential fashion forming a multimeric L10(L12)X complex. Post-translationally, one or more lysine residues are methylated.

Forms part of the ribosomal stalk which helps the ribosome interact with GTP-bound translation factors. The protein is Large ribosomal subunit protein uL11 of Thioalkalivibrio sulfidiphilus (strain HL-EbGR7).